A 173-amino-acid polypeptide reads, in one-letter code: MKETIRIIGIDPGLLRTGWGIVESLGNSLHFIGSGTVTSNAEMDLASRLCQLHEGLSKVLHEFMPHEAAVEHTFVNKDATATLKLGQARGIALLAPAQAGLPVAEYAPNAVKKAVIGVGHGEKQQIHMMVKVLMPRASFDTSDAADALAIAICHAHHRQSIVSARRMQALLAG.

Residues Asp11, Glu71, and Asp143 contribute to the active site. The Mg(2+) site is built by Asp11, Glu71, and Asp143.

The protein belongs to the RuvC family. Homodimer which binds Holliday junction (HJ) DNA. The HJ becomes 2-fold symmetrical on binding to RuvC with unstacked arms; it has a different conformation from HJ DNA in complex with RuvA. In the full resolvosome a probable DNA-RuvA(4)-RuvB(12)-RuvC(2) complex forms which resolves the HJ. It depends on Mg(2+) as a cofactor.

Its subcellular location is the cytoplasm. The catalysed reaction is Endonucleolytic cleavage at a junction such as a reciprocal single-stranded crossover between two homologous DNA duplexes (Holliday junction).. Its function is as follows. The RuvA-RuvB-RuvC complex processes Holliday junction (HJ) DNA during genetic recombination and DNA repair. Endonuclease that resolves HJ intermediates. Cleaves cruciform DNA by making single-stranded nicks across the HJ at symmetrical positions within the homologous arms, yielding a 5'-phosphate and a 3'-hydroxyl group; requires a central core of homology in the junction. The consensus cleavage sequence is 5'-(A/T)TT(C/G)-3'. Cleavage occurs on the 3'-side of the TT dinucleotide at the point of strand exchange. HJ branch migration catalyzed by RuvA-RuvB allows RuvC to scan DNA until it finds its consensus sequence, where it cleaves and resolves the cruciform DNA. The protein is Crossover junction endodeoxyribonuclease RuvC of Brucella suis biovar 1 (strain 1330).